Reading from the N-terminus, the 1462-residue chain is Gag-Pro-Pol polyprotein (1462 aa).

Gly-2 is lipidated: N-myristoyl glycine; by host. Positions Gln-93–Arg-143 are disordered. Ser-105 is modified (phosphoserine; by host MAPK1). Positions Pro-118–Tyr-121 match the PPXY motif motif. Residues Pro-124–Pro-127 carry the PTAP/PSAP motif motif. CCHC-type zinc fingers lie at residues Gln-355 to Gln-372 and Gly-378 to Arg-395. The Peptidase A2 domain occupies Ile-476–Ala-554. The For protease activity; shared with dimeric partner role is filled by Asp-481. The Reverse transcriptase domain maps to Leu-614–Ile-804. Mg(2+) is bound by residues Asp-680, Asp-755, Asp-756, Asp-1040, Glu-1074, Asp-1096, Asp-1157, Asp-1230, and Asp-1287. The region spanning Ile-1031 to Leu-1165 is the RNase H type-1 domain. The 170-residue stretch at Arg-1219–Ile-1388 folds into the Integrase catalytic domain. The segment at residues His-1393–Cys-1443 is a DNA-binding region (integrase-type).

Homodimer; the homodimers are part of the immature particles. Interacts with human TSG101 and NEDD4; these interactions are essential for budding and release of viral particles. As to quaternary structure, homodimer; further assembles as homohexamers. The cofactor is Mg(2+). In terms of processing, phosphorylation of the matrix protein p19 by MAPK1 seems to play a role in budding. Myristoylated. Myristoylation of the matrix (MA) domain mediates the transport and binding of Gag polyproteins to the host plasma membrane and is required for the assembly of viral particles. Post-translationally, specific enzymatic cleavages by the viral protease yield mature proteins. The polyprotein is cleaved during and after budding, this process is termed maturation. The protease is autoproteolytically processed at its N- and C-termini.

It localises to the virion. It catalyses the reaction Endonucleolytic cleavage to 5'-phosphomonoester.. The catalysed reaction is DNA(n) + a 2'-deoxyribonucleoside 5'-triphosphate = DNA(n+1) + diphosphate. Functionally, the matrix domain targets Gag, Gag-Pro and Gag-Pro-Pol polyproteins to the plasma membrane via a multipartite membrane binding signal, that includes its myristoylated N-terminus. In terms of biological role, matrix protein. Forms the spherical core of the virus that encapsulates the genomic RNA-nucleocapsid complex. Its function is as follows. Binds strongly to viral nucleic acids and promote their aggregation. Also destabilizes the nucleic acids duplexes via highly structured zinc-binding motifs. Functionally, the aspartyl protease mediates proteolytic cleavages of Gag and Gag-Pol polyproteins during or shortly after the release of the virion from the plasma membrane. Cleavages take place as an ordered, step-wise cascade to yield mature proteins. This process is called maturation. Displays maximal activity during the budding process just prior to particle release from the cell (Potential). Cleaves the translation initiation factor eIF4G leading to the inhibition of host cap-dependent translation. In terms of biological role, RT is a multifunctional enzyme that converts the viral RNA genome into dsDNA in the cytoplasm, shortly after virus entry into the cell. This enzyme displays a DNA polymerase activity that can copy either DNA or RNA templates, and a ribonuclease H (RNase H) activity that cleaves the RNA strand of RNA-DNA heteroduplexes in a partially processive 3' to 5'-endonucleasic mode. Conversion of viral genomic RNA into dsDNA requires many steps. A tRNA-Pro binds to the primer-binding site (PBS) situated at the 5'-end of the viral RNA. RT uses the 3' end of the tRNA primer to perform a short round of RNA-dependent minus-strand DNA synthesis. The reading proceeds through the U5 region and ends after the repeated (R) region which is present at both ends of viral RNA. The portion of the RNA-DNA heteroduplex is digested by the RNase H, resulting in a ssDNA product attached to the tRNA primer. This ssDNA/tRNA hybridizes with the identical R region situated at the 3' end of viral RNA. This template exchange, known as minus-strand DNA strong stop transfer, can be either intra- or intermolecular. RT uses the 3' end of this newly synthesized short ssDNA to perform the RNA-dependent minus-strand DNA synthesis of the whole template. RNase H digests the RNA template except for a polypurine tract (PPT) situated at the 5' end of the genome. It is not clear if both polymerase and RNase H activities are simultaneous. RNase H probably can proceed both in a polymerase-dependent (RNA cut into small fragments by the same RT performing DNA synthesis) and a polymerase-independent mode (cleavage of remaining RNA fragments by free RTs). Secondly, RT performs DNA-directed plus-strand DNA synthesis using the PPT that has not been removed by RNase H as primer. PPT and tRNA primers are then removed by RNase H. The 3' and 5' ssDNA PBS regions hybridize to form a circular dsDNA intermediate. Strand displacement synthesis by RT to the PBS and PPT ends produces a blunt ended, linear dsDNA copy of the viral genome that includes long terminal repeats (LTRs) at both ends. Catalyzes viral DNA integration into the host chromosome, by performing a series of DNA cutting and joining reactions. The polypeptide is Gag-Pro-Pol polyprotein (gag-pro-pol) (Homo sapiens (Human)).